Here is a 341-residue protein sequence, read N- to C-terminus: RNA 3'-terminal phosphate cyclase (341 aa).

Residues Gln102 and 283–287 (HLADQ) each bind ATP. His308 (tele-AMP-histidine intermediate) is an active-site residue.

This sequence belongs to the RNA 3'-terminal cyclase family. Type 1 subfamily.

The protein resides in the cytoplasm. The catalysed reaction is a 3'-end 3'-phospho-ribonucleotide-RNA + ATP = a 3'-end 2',3'-cyclophospho-ribonucleotide-RNA + AMP + diphosphate. Functionally, catalyzes the conversion of 3'-phosphate to a 2',3'-cyclic phosphodiester at the end of RNA. The mechanism of action of the enzyme occurs in 3 steps: (A) adenylation of the enzyme by ATP; (B) transfer of adenylate to an RNA-N3'P to produce RNA-N3'PP5'A; (C) and attack of the adjacent 2'-hydroxyl on the 3'-phosphorus in the diester linkage to produce the cyclic end product. The biological role of this enzyme is unknown but it is likely to function in some aspects of cellular RNA processing. This Pseudomonas aeruginosa (strain LESB58) protein is RNA 3'-terminal phosphate cyclase.